The following is a 221-amino-acid chain: GTPase Obg (221 aa).

The region spanning proline 1–glutamine 61 is the OBG-type G domain. Residues asparagine 10 to aspartate 13 and serine 42 to valine 44 contribute to the GTP site. The OCT domain occupies valine 82–proline 162.

This sequence belongs to the TRAFAC class OBG-HflX-like GTPase superfamily. OBG GTPase family. In terms of assembly, monomer. The cofactor is Mg(2+).

The protein resides in the cytoplasm. Functionally, an essential GTPase which binds GTP, GDP and possibly (p)ppGpp with moderate affinity, with high nucleotide exchange rates and a fairly low GTP hydrolysis rate. Plays a role in control of the cell cycle, stress response, ribosome biogenesis and in those bacteria that undergo differentiation, in morphogenesis control. The polypeptide is GTPase Obg (Corynebacterium melassecola).